The sequence spans 290 residues: 4-diphosphocytidyl-2-C-methyl-D-erythritol kinase (290 aa).

Lys-8 is an active-site residue. Residue 92–102 participates in ATP binding; it reads PISAGLAGGST. Asp-134 is an active-site residue.

This sequence belongs to the GHMP kinase family. IspE subfamily.

The catalysed reaction is 4-CDP-2-C-methyl-D-erythritol + ATP = 4-CDP-2-C-methyl-D-erythritol 2-phosphate + ADP + H(+). The protein operates within isoprenoid biosynthesis; isopentenyl diphosphate biosynthesis via DXP pathway; isopentenyl diphosphate from 1-deoxy-D-xylulose 5-phosphate: step 3/6. Catalyzes the phosphorylation of the position 2 hydroxy group of 4-diphosphocytidyl-2C-methyl-D-erythritol. This is 4-diphosphocytidyl-2-C-methyl-D-erythritol kinase from Caldicellulosiruptor saccharolyticus (strain ATCC 43494 / DSM 8903 / Tp8T 6331).